The chain runs to 242 residues: MAETEALSKLREDFRMQNKSVFILGASGETGRVLLKEILEQGLFSKVTLIGRRKLTFDEEAYKNVNQEVVDFEKLDDYASAFQGHDVGFCCLGTTRGKAGAEGFVRVDRDYVLKSAELAKAGGCKHFNLLSSKGADKSSNFLYLQVKGEVEAKVEELKFDRYSVFRPGVLLCDRQESRPGEWLVRKFFGSLPDSWASGHSVPVVTVVRAMLNNVVRPRDKQMELLENKAIHDLGKAHGSLKP.

Alanine 2 bears the N-acetylalanine mark. The interval 2–25 (AETEALSKLREDFRMQNKSVFILG) is required for interaction with elongation factor EEF1A1. The NADPH site is built by serine 27, glycine 28, glutamate 29, threonine 30, arginine 52, arginine 53, leucine 92, glycine 93, tyrosine 143, lysine 147, leucine 170, and arginine 178. Tyrosine 143 acts as the Proton acceptor in catalysis. Residue lysine 147 is part of the active site.

Monomer. Forms homodimers during oxidative stress. Interacts (via N-terminus) with elongation factor EEF1A1 (via middle-region); the interaction is direct and competes with EEF1A1 binding to guanyl-nucleotide exchange factor EEF1B2, thereby inhibiting GDP for GTP exchange and reactivation of EEF1A1. Interacts with nuclear transport receptors XPO4, IPO5/RANBP5, IPO7, IPO9 and KPNB1 as well as GCN1L1/GCN1 and LRPPRC probably through their HEAT repeats. Binds NCOA5/CIA. In terms of assembly, interacts (via N-terminus) with proteasome subunit PSMD4/s5a. As to quaternary structure, (Microbial infection) Interacts with HIV-1 Tat (via activation domain). As to expression, high levels in liver, lung, skeletal muscle, pancreas and placenta. Moderate levels in heart and kidney. Low levels in brain. Not expressed or low levels in variant small cell lung carcinomas, 33% of hepatocellular carcinomas and neuroblastomas. Levels are reduced in the heart of patients with hypertrophic cardiomyopathy and failing hearts.

The protein localises to the cytoplasm. Represses translation by preventing reactivation of elongation factor eEF1A. May also inhibit nuclear import by competing with nuclear import substrates for binding to a subset of nuclear transport receptors. Has additionally been proposed to act as a redox sensor involved in cellular oxidative stress surveillance. This is Protein HTATIP2 from Homo sapiens (Human).